The chain runs to 273 residues: MAAVTRYSGKVVVVTGGSRGIGAAIVRAFVDSGAQVVFCDKDEAGGRALEQELSGTVFIPGDVTQERDLQTLVSETLSRFGHLDCVVNNAGYHPPAQLPEETSAQGFRQLLEVNLLGTYTLIKLALPHLRKSRGNIINISSLVGAIGQSQALTYVATKGAVTAMTKALALDESRHGVRVNCISPGNIWTPLWEELAASTSDPRATILEGTLAQPLGRMGQPAEVAAAAVFLASEATFCTGLELLVTGGAELGYGRKASKSSLGEVPTLPPNVH.

Residues arginine 19, isoleucine 21, aspartate 40, lysine 41, aspartate 62, valine 63, asparagine 89, tyrosine 154, lysine 158, isoleucine 187, threonine 189, and leucine 191 each coordinate NAD(+). The Proton acceptor role is filled by tyrosine 154.

The protein belongs to the short-chain dehydrogenases/reductases (SDR) family. Homotetramer.

It localises to the cytoplasm. The catalysed reaction is L-fucose + NAD(+) = L-fucono-1,5-lactone + NADH + H(+). It carries out the reaction D-arabinose + NAD(+) = D-arabinono-1,5-lactone + NADH + H(+). It catalyses the reaction L-galactose + NAD(+) = L-galactono-1,5-lactone + NADH + H(+). The protein operates within carbohydrate degradation; L-fucose degradation. Functionally, catalyzes the NAD(+)-dependent oxidation of L-fucose, yielding L-fucono-1,5-lactone, which rapidly converts spontaneously to L-fucone-1,4-lactone. Can also act on D-arabinose and L-galactose, with lower catalytic efficiency. Does not use NADPH. May be the initial enzyme of the putative L-fucose degradation pathway in mammals. In Mus musculus (Mouse), this protein is L-fucose dehydrogenase.